A 287-amino-acid polypeptide reads, in one-letter code: Eukaryotic translation initiation factor 3 subunit F (287 aa).

Positions Val12–Gly142 constitute an MPN domain.

It belongs to the eIF-3 subunit F family. As to quaternary structure, component of the eukaryotic translation initiation factor 3 (eIF-3) complex.

The protein resides in the cytoplasm. In terms of biological role, component of the eukaryotic translation initiation factor 3 (eIF-3) complex, which is involved in protein synthesis of a specialized repertoire of mRNAs and, together with other initiation factors, stimulates binding of mRNA and methionyl-tRNAi to the 40S ribosome. The eIF-3 complex specifically targets and initiates translation of a subset of mRNAs involved in cell proliferation. The polypeptide is Eukaryotic translation initiation factor 3 subunit F (Aedes aegypti (Yellowfever mosquito)).